The following is a 509-amino-acid chain: Transmembrane protein 104 homolog (509 aa).

Residues 1–19 (MPRLVNGREAAPTYSNLVG) lie on the Cytoplasmic side of the membrane. A helical membrane pass occupies residues 20 to 40 (FIFIFNLIVGTGALTLPGVFA). The Extracellular segment spans residues 41 to 45 (RAGWM). A helical transmembrane segment spans residues 46 to 66 (LSLIVIVLLAIISYMTVTFII). The Cytoplasmic portion of the chain corresponds to 67–151 (EAMACANAIR…ATLFFNEFGR (85 aa)). A helical transmembrane segment spans residues 152 to 172 (VMFYLCLIVYLYGDLSIYSAA). Over 173 to 218 (VARSLRDVVCDQTNGTDTNNLMYWPGDFENNTSLACWKEHTISRLN) the chain is Extracellular. 3 N-linked (GlcNAc...) asparagine glycosylation sites follow: asparagine 186, asparagine 202, and asparagine 203. The chain crosses the membrane as a helical span at residues 219 to 239 (MYRVLLIGFTLIFGPFVYFNV). Topologically, residues 240–248 (QKTKYLQML) are cytoplasmic. Residues 249–269 (TAAFRWMAFTLMICISLKLLI) form a helical membrane-spanning segment. At 270-277 (SRGAKGHP) the chain is on the extracellular side. Residues 278-298 (ATFNVYGIPSLFGACVYSFMC) form a helical membrane-spanning segment. The Cytoplasmic segment spans residues 299–320 (HHSLPSLLAPIRHKSMVSKILS). The chain crosses the membrane as a helical span at residues 321-341 (IDYIIICAFYILLAMTGIFAF). The Extracellular portion of the chain corresponds to 342-361 (ERIEDLYTLDFLPYDVAYVD). Residues 362-382 (FWSGLLICIDYFLALFPIFTL) traverse the membrane as a helical segment. The Cytoplasmic segment spans residues 383–411 (STSFPIVAITLKNNLQSLFLDMSQYESYS). Residues 412–432 (VILRLCFPLLAIIPPFCITYF) form a helical membrane-spanning segment. The Extracellular segment spans residues 433–439 (TESLSSL). The chain crosses the membrane as a helical span at residues 440-460 (VAFTGTYAGTGIQYIIPVFLV). The Cytoplasmic portion of the chain corresponds to 461–487 (YFARRTCSELLGSGVVNRFKSPFKSSA). Residues 488–508 (WLVFVFIWSILCVCLVSINLF) form a helical membrane-spanning segment. Serine 509 is a topological domain (extracellular).

This sequence belongs to the TMEM104 family.

It is found in the membrane. In Drosophila melanogaster (Fruit fly), this protein is Transmembrane protein 104 homolog.